The chain runs to 260 residues: 14-3-3-like protein C (260 aa).

The protein belongs to the 14-3-3 family.

This chain is 14-3-3-like protein C, found in Nicotiana tabacum (Common tobacco).